The sequence spans 391 residues: Phosphoglycerate kinase (391 aa).

Residues 21 to 23 (DLN), Arg-36, 59 to 62 (HLGR), Arg-114, and Arg-147 contribute to the substrate site. Residues Lys-198, Glu-315, and 344–347 (GGDT) contribute to the ATP site.

This sequence belongs to the phosphoglycerate kinase family. As to quaternary structure, monomer.

It is found in the cytoplasm. It catalyses the reaction (2R)-3-phosphoglycerate + ATP = (2R)-3-phospho-glyceroyl phosphate + ADP. It participates in carbohydrate degradation; glycolysis; pyruvate from D-glyceraldehyde 3-phosphate: step 2/5. The sequence is that of Phosphoglycerate kinase from Actinobacillus pleuropneumoniae serotype 5b (strain L20).